The chain runs to 431 residues: Glutamyl-tRNA(Gln) amidotransferase subunit A (431 aa).

Residues K55 and S130 each act as charge relay system in the active site. The active-site Acyl-ester intermediate is the S154.

This sequence belongs to the amidase family. GatA subfamily. Heterotrimer of A, B and C subunits.

The catalysed reaction is L-glutamyl-tRNA(Gln) + L-glutamine + ATP + H2O = L-glutaminyl-tRNA(Gln) + L-glutamate + ADP + phosphate + H(+). Allows the formation of correctly charged Gln-tRNA(Gln) through the transamidation of misacylated Glu-tRNA(Gln) in organisms which lack glutaminyl-tRNA synthetase. The reaction takes place in the presence of glutamine and ATP through an activated gamma-phospho-Glu-tRNA(Gln). This chain is Glutamyl-tRNA(Gln) amidotransferase subunit A, found in Methanococcus maripaludis (strain C7 / ATCC BAA-1331).